The following is a 1088-amino-acid chain: Myocardin-related transcription factor B (1088 aa).

The residue at position 22 (Glu22) is a Phosphoserine. The RPEL 1 repeat unit spans residues 40–65 (EVLQLRLQQRRTREQLVDQGIMPPLK). Ser66 carries the post-translational modification Phosphoserine. RPEL repeat units follow at residues 84-109 (NFLK…EETF) and 128-153 (DDLN…PVDS). Disordered stretches follow at residues 165 to 310 (EDYP…NEPQ), 349 to 389 (KPLN…PSSL), 472 to 508 (AELP…STDD), and 528 to 553 (LSSS…SNLE). Over residues 197–213 (SAASPSEPKVSESPSPV) the composition is skewed to low complexity. Polar residues predominate over residues 214–226 (TTNTPAQFASVSP). The span at 238–248 (ADQPPPRPAAP) shows a compositional bias: pro residues. Basic and acidic residues predominate over residues 272–287 (NPNDKHRSKKCKDPKP). Residues 355–366 (NSNSGNSALNNA) show a composition bias toward low complexity. Thr367 and Thr370 each carry phosphothreonine. A compositionally biased stretch (polar residues) spans 367 to 378 (TPNTPRQNTSTP). An SAP domain is found at 389–423 (LDDLKVSELKTELKLRGLPVSGTKPDLIERLKPYQ). Residues 528-540 (LSSSPLRMTNNED) show a composition bias toward polar residues. 2 positions are modified to phosphoserine: Ser541 and Ser543. The segment covering 541 to 550 (SLSPTSSTLS) has biased composition (low complexity). Positions 545-601 (TSSTLSNLELDAAEKDRKLQEKEKQIEELKRKLEQEQKLVEVLKMQLEVEKRGQQQR) form a coiled coil. The tract at residues 563 to 591 (LQEKEKQIEELKRKLEQEQKLVEVLKMQL) is required for interaction with itself and with MRTFA. Disordered regions lie at residues 595–655 (KRGQ…QPVS) and 829–886 (NAPL…STQA). Lys628 is covalently cross-linked (Glycyl lysine isopeptide (Lys-Gly) (interchain with G-Cter in SUMO1)). The span at 829-838 (NAPLPSLQNG) shows a compositional bias: polar residues. The span at 867 to 879 (KTKDPPRYEEAIK) shows a compositional bias: basic and acidic residues. Position 921 is a phosphoserine (Ser921).

Interacts with MRTFA and SRF. Post-translationally, O-glycosylated.

The protein resides in the nucleus. Functionally, acts as a transcriptional coactivator of serum response factor (SRF). Required for skeletal myogenic differentiation. This Homo sapiens (Human) protein is Myocardin-related transcription factor B.